The following is a 209-amino-acid chain: Chloramphenicol acetyltransferase (209 aa).

Residue His78 is part of the active site.

It belongs to the transferase hexapeptide repeat family.

The catalysed reaction is chloramphenicol + acetyl-CoA = chloramphenicol 3-acetate + CoA. Functionally, this enzyme is an effector of chloramphenicol resistance in bacteria. This Agrobacterium fabrum (strain C58 / ATCC 33970) (Agrobacterium tumefaciens (strain C58)) protein is Chloramphenicol acetyltransferase (cat).